Consider the following 115-residue polypeptide: Large ribosomal subunit protein P2 (115 aa).

The residue at position 1 (methionine 1) is an N-acetylmethionine. Phosphoserine is present on residues serine 17 and serine 19. The residue at position 21 (lysine 21) is an N6-acetyllysine; alternate. Lysine 21 is subject to N6-succinyllysine; alternate. The segment covering 76–90 (APGSAAPAAGSAPAA) has biased composition (low complexity). The tract at residues 76–115 (APGSAAPAAGSAPAAAEEKKEEKKEESEESDDDMGFGLFD) is disordered. 2 positions are modified to phosphoserine: serine 79 and serine 86. Positions 91–101 (AEEKKEEKKEE) are enriched in basic and acidic residues. 2 positions are modified to phosphoserine: serine 102 and serine 105.

Belongs to the eukaryotic ribosomal protein P1/P2 family. As to quaternary structure, heterodimer with RPLP1 at the lateral ribosomal stalk of the large ribosomal subunit.

Its function is as follows. Plays an important role in the elongation step of protein synthesis. The polypeptide is Large ribosomal subunit protein P2 (RPLP2) (Bos taurus (Bovine)).